Consider the following 66-residue polypeptide: Large ribosomal subunit protein bL35 (66 aa).

Residues 1–26 (MPKMKTHRGSAKRFKKTGSGKLKRSH) are compositionally biased toward basic residues. Positions 1–48 (MPKMKTHRGSAKRFKKTGSGKLKRSHAYTSHLFANKSQKQKRKLRKSA) are disordered.

Belongs to the bacterial ribosomal protein bL35 family. In terms of assembly, part of the 50S ribosomal subunit.

The chain is Large ribosomal subunit protein bL35 from Bacillus subtilis (strain 168).